Reading from the N-terminus, the 325-residue chain is MPEYQNIFTTVQVRAPAYPGVPLPKGSLPRIGKPIFSYWAGKIGDAQIGPIYLGFTGTLSIIFGFMAIFIIGFNMLASVDWNIIQFVKHFFWLGLEPPAPQYGLTIPPLSEGGWWLMAGFFLTMSILLWWVRTYKRAEALGMSQHLSWAFAAAIFFYLSLGFIRPVMMGSWAEAVPFGIFPHLDWTAAFSIRYGNLYYNPFHMLSIAFLYGSALLFAMHGATILAVSRFGGDREIDQITDRGTAAERAAIFWRWTMGFNASMESIHRWAWWCAVLTVITAGIGILLTGTVVENWYLWAIKHGVAPAYPEVVTAVDPYATATGVTQ.

The next 3 helical transmembrane spans lie at 53–79 (LGFT…LASV), 111–140 (EGGW…AEAL), and 143–168 (SQHL…PVMM). 2 residues coordinate (7R,8Z)-bacteriochlorophyll b: His-182 and His-202. A helical transmembrane segment spans residues 198–226 (YNPFHMLSIAFLYGSALLFAMHGATILAV). Fe cation is bound by residues His-219 and Glu-234. A ubiquinone is bound at residue Trp-252. Fe cation is bound at residue His-266.

The protein belongs to the reaction center PufL/M/PsbA/D family. In terms of assembly, reaction center is composed of four bacteriochlorophylls, two bacteriopheophytins, two ubiquinones, one iron, and two highly hydrophobic polypeptide chains (designated L and M).

The protein resides in the cellular chromatophore membrane. Its function is as follows. The reaction center is a membrane-bound complex that mediates the initial photochemical event in the electron transfer process of photosynthesis. This chain is Reaction center protein M chain (pufM), found in Allochromatium vinosum (strain ATCC 17899 / DSM 180 / NBRC 103801 / NCIMB 10441 / D) (Chromatium vinosum).